We begin with the raw amino-acid sequence, 262 residues long: Type II restriction enzyme MspI (262 aa).

It catalyses the reaction Endonucleolytic cleavage of DNA to give specific double-stranded fragments with terminal 5'-phosphates.. Its function is as follows. A P subtype restriction enzyme that recognizes the double-stranded sequence 5'-CCGG-3' and cleaves after C-1. This Moraxella sp protein is Type II restriction enzyme MspI (mspIR).